The sequence spans 398 residues: Alpha-monoglucosyldiacylglycerol synthase (398 aa).

Belongs to the glycosyltransferase group 1 family. Glycosyltransferase 4 subfamily. Requires Mg(2+) as cofactor.

The protein resides in the cell membrane. The catalysed reaction is a 1,2-diacyl-sn-glycerol + UDP-alpha-D-glucose = a 1,2-diacyl-3-O-(alpha-D-glucopyranosyl)-sn-glycerol + UDP + H(+). Activated by the negatively charged lipids phosphatidylglycerol (PG), cardiolipin (CL), dodecylphosphate-rac-glycerol (PDG), 1,2-dioleoyl-phosphatidylglycerol (DOPG) and phosphatidylserine (PS). Its function is as follows. Glucosyltransferase involved in the biosynthesis of the non-bilayer-prone membrane lipid alpha-monoglucosyldiacylglycerol. This is a major component for maintaining a certain anionic lipid surface charge density, for balancing the bilayer to non-bilayer phase equilibria and for keeping a constant lipid bilayer spontaneous curvature (curvature packing stress). Catalyzes the transfer of a glucosyl residue from UDP-Glc to diacylglycerol (DAG) acceptor to form the corresponding alpha-glucosyl-DAG (1,2-diacyl-3-O-(alpha-D-glucopyranosyl)-sn-glycerol). It can only use UDP-Glc as sugar donor and DAG is the preferred substrate. This is Alpha-monoglucosyldiacylglycerol synthase (mgs) from Acholeplasma laidlawii.